A 199-amino-acid polypeptide reads, in one-letter code: Recombination protein RecR (199 aa).

Residues 58 to 73 (CRRCFNLTEGEECDIC) form a C4-type zinc finger. In terms of domain architecture, Toprim spans 81–176 (SVICVVEDPY…RVTALASGLP (96 aa)).

The protein belongs to the RecR family.

Functionally, may play a role in DNA repair. It seems to be involved in an RecBC-independent recombinational process of DNA repair. It may act with RecF and RecO. This Rubrobacter xylanophilus (strain DSM 9941 / JCM 11954 / NBRC 16129 / PRD-1) protein is Recombination protein RecR.